Reading from the N-terminus, the 457-residue chain is Na(+)/H(+) antiporter NhaA (457 aa).

Transmembrane regions (helical) follow at residues 33-53, 76-96, 114-134, 142-162, 172-192, 196-216, 235-255, 308-328, 349-369, 385-405, and 419-439; these read ASGI…NSPL, FSLA…VVGM, LLPL…FLAF, AGWG…LTLL, VFVT…IALF, GLQL…ALMS, YALH…GLAI, FVHA…ALAN, TALA…WIAV, LIGV…IAGL, and VGIL…LRLT.

This sequence belongs to the NhaA Na(+)/H(+) (TC 2.A.33) antiporter family.

Its subcellular location is the cell inner membrane. It carries out the reaction Na(+)(in) + 2 H(+)(out) = Na(+)(out) + 2 H(+)(in). Na(+)/H(+) antiporter that extrudes sodium in exchange for external protons. The protein is Na(+)/H(+) antiporter NhaA of Anaeromyxobacter sp. (strain Fw109-5).